A 215-amino-acid chain; its full sequence is LexA repressor (215 aa).

The segment at residues 29–49 (VREICSAVGFKSTSTVHSYLQ) is a DNA-binding region (H-T-H motif). Residues Ser-138 and Lys-175 each act as for autocatalytic cleavage activity in the active site.

Belongs to the peptidase S24 family. Homodimer.

It carries out the reaction Hydrolysis of Ala-|-Gly bond in repressor LexA.. Represses a number of genes involved in the response to DNA damage (SOS response), including recA and lexA. In the presence of single-stranded DNA, RecA interacts with LexA causing an autocatalytic cleavage which disrupts the DNA-binding part of LexA, leading to derepression of the SOS regulon and eventually DNA repair. This is LexA repressor from Ruminiclostridium cellulolyticum (strain ATCC 35319 / DSM 5812 / JCM 6584 / H10) (Clostridium cellulolyticum).